Here is a 253-residue protein sequence, read N- to C-terminus: Imidazole glycerol phosphate synthase subunit HisF (253 aa).

Catalysis depends on residues aspartate 11 and aspartate 130.

It belongs to the HisA/HisF family. As to quaternary structure, heterodimer of HisH and HisF.

The protein resides in the cytoplasm. It carries out the reaction 5-[(5-phospho-1-deoxy-D-ribulos-1-ylimino)methylamino]-1-(5-phospho-beta-D-ribosyl)imidazole-4-carboxamide + L-glutamine = D-erythro-1-(imidazol-4-yl)glycerol 3-phosphate + 5-amino-1-(5-phospho-beta-D-ribosyl)imidazole-4-carboxamide + L-glutamate + H(+). It participates in amino-acid biosynthesis; L-histidine biosynthesis; L-histidine from 5-phospho-alpha-D-ribose 1-diphosphate: step 5/9. In terms of biological role, IGPS catalyzes the conversion of PRFAR and glutamine to IGP, AICAR and glutamate. The HisF subunit catalyzes the cyclization activity that produces IGP and AICAR from PRFAR using the ammonia provided by the HisH subunit. The protein is Imidazole glycerol phosphate synthase subunit HisF of Opitutus terrae (strain DSM 11246 / JCM 15787 / PB90-1).